The following is a 484-amino-acid chain: Probable glycine dehydrogenase (decarboxylating) subunit 2 (484 aa).

Lysine 264 is subject to N6-(pyridoxal phosphate)lysine.

It belongs to the GcvP family. C-terminal subunit subfamily. As to quaternary structure, the glycine cleavage system is composed of four proteins: P, T, L and H. In this organism, the P 'protein' is a heterodimer of two subunits. Pyridoxal 5'-phosphate serves as cofactor.

The enzyme catalyses N(6)-[(R)-lipoyl]-L-lysyl-[glycine-cleavage complex H protein] + glycine + H(+) = N(6)-[(R)-S(8)-aminomethyldihydrolipoyl]-L-lysyl-[glycine-cleavage complex H protein] + CO2. Its function is as follows. The glycine cleavage system catalyzes the degradation of glycine. The P protein binds the alpha-amino group of glycine through its pyridoxal phosphate cofactor; CO(2) is released and the remaining methylamine moiety is then transferred to the lipoamide cofactor of the H protein. In Legionella pneumophila (strain Lens), this protein is Probable glycine dehydrogenase (decarboxylating) subunit 2.